A 380-amino-acid chain; its full sequence is Cytochrome b (380 aa).

Transmembrane regions (helical) follow at residues 34–54, 78–99, 114–134, and 179–199; these read FGSL…LLAM, WLIR…YLHI, WNTG…GYVL, and FFAL…VHLT. The heme b site is built by H84 and H98. 2 residues coordinate heme b: H183 and H197. H202 lines the a ubiquinone pocket. Transmembrane regions (helical) follow at residues 227–247, 289–309, 321–341, and 348–368; these read LKDI…ALFS, LGGV…PFLH, LSQL…WVGS, and FIII…ILFP.

The protein belongs to the cytochrome b family. In terms of assembly, the cytochrome bc1 complex contains 11 subunits: 3 respiratory subunits (MT-CYB, CYC1 and UQCRFS1), 2 core proteins (UQCRC1 and UQCRC2) and 6 low-molecular weight proteins (UQCRH/QCR6, UQCRB/QCR7, UQCRQ/QCR8, UQCR10/QCR9, UQCR11/QCR10 and a cleavage product of UQCRFS1). This cytochrome bc1 complex then forms a dimer. The cofactor is heme b.

The protein resides in the mitochondrion inner membrane. Its function is as follows. Component of the ubiquinol-cytochrome c reductase complex (complex III or cytochrome b-c1 complex) that is part of the mitochondrial respiratory chain. The b-c1 complex mediates electron transfer from ubiquinol to cytochrome c. Contributes to the generation of a proton gradient across the mitochondrial membrane that is then used for ATP synthesis. In Procellaria westlandica (Westland petrel), this protein is Cytochrome b (MT-CYB).